Here is a 466-residue protein sequence, read N- to C-terminus: Argininosuccinate lyase (466 aa).

The protein belongs to the lyase 1 family. Argininosuccinate lyase subfamily.

The protein resides in the cytoplasm. It carries out the reaction 2-(N(omega)-L-arginino)succinate = fumarate + L-arginine. The protein operates within amino-acid biosynthesis; L-arginine biosynthesis; L-arginine from L-ornithine and carbamoyl phosphate: step 3/3. This chain is Argininosuccinate lyase, found in Roseobacter denitrificans (strain ATCC 33942 / OCh 114) (Erythrobacter sp. (strain OCh 114)).